Reading from the N-terminus, the 673-residue chain is UvrABC system protein B (673 aa).

The 389-residue stretch at E25–R413 folds into the Helicase ATP-binding domain. Position 38–45 (G38–T45) interacts with ATP. Positions Y91–V114 match the Beta-hairpin motif. The 154-residue stretch at Q430–I583 folds into the Helicase C-terminal domain. The region spanning D634–Q669 is the UVR domain.

It belongs to the UvrB family. Forms a heterotetramer with UvrA during the search for lesions. Interacts with UvrC in an incision complex.

The protein localises to the cytoplasm. In terms of biological role, the UvrABC repair system catalyzes the recognition and processing of DNA lesions. A damage recognition complex composed of 2 UvrA and 2 UvrB subunits scans DNA for abnormalities. Upon binding of the UvrA(2)B(2) complex to a putative damaged site, the DNA wraps around one UvrB monomer. DNA wrap is dependent on ATP binding by UvrB and probably causes local melting of the DNA helix, facilitating insertion of UvrB beta-hairpin between the DNA strands. Then UvrB probes one DNA strand for the presence of a lesion. If a lesion is found the UvrA subunits dissociate and the UvrB-DNA preincision complex is formed. This complex is subsequently bound by UvrC and the second UvrB is released. If no lesion is found, the DNA wraps around the other UvrB subunit that will check the other stand for damage. This is UvrABC system protein B from Colwellia psychrerythraea (strain 34H / ATCC BAA-681) (Vibrio psychroerythus).